We begin with the raw amino-acid sequence, 174 residues long: Transcription antitermination protein NusB (174 aa).

Positions 1-11 (MSEVETTNDQT) are enriched in polar residues. The disordered stretch occupies residues 1–29 (MSEVETTNDQTPAPKRKDKKPSRSQLRSA).

It belongs to the NusB family.

Its function is as follows. Involved in transcription antitermination. Required for transcription of ribosomal RNA (rRNA) genes. Binds specifically to the boxA antiterminator sequence of the ribosomal RNA (rrn) operons. This chain is Transcription antitermination protein NusB, found in Marinomonas sp. (strain MWYL1).